Here is a 160-residue protein sequence, read N- to C-terminus: Small ribosomal subunit protein bS16 (160 aa).

A disordered region spans residues 115 to 139; it reads GGPTTEATRPKKKVSAKKAAKAVES. A compositionally biased stretch (basic residues) spans 124 to 134; that stretch reads PKKKVSAKKAA.

It belongs to the bacterial ribosomal protein bS16 family.

The sequence is that of Small ribosomal subunit protein bS16 from Mycobacterium leprae (strain Br4923).